The following is a 307-amino-acid chain: Serine/threonine-protein phosphatase PP2A-5 catalytic subunit (307 aa).

Asp-55, His-57, Asp-83, and Asn-115 together coordinate Mn(2+). His-116 serves as the catalytic Proton donor. Residues His-165 and His-239 each coordinate Mn(2+). Leu-307 is subject to Leucine methyl ester.

The protein belongs to the PPP phosphatase family. PP-2A subfamily. In terms of assembly, PP2A consists of a common heterodimeric core enzyme, composed of a 36 kDa catalytic subunit (subunit C) and a 65 kDa constant regulatory subunit (subunit A), that associates with a variety of regulatory subunits such as subunits B (the R2/B/PR55/B55, R3/B''/PR72/PR130/PR59 and R5/B'/B56 families). Also interacts with CHIP and TAF12B. Interacts with B'THETA. Interacts with CLC-A, CLC-B, CLC-C and CLC-G. Mn(2+) serves as cofactor. In terms of processing, reversibly methyl esterified on Leu-307 by leucine carboxyl methyltransferase 1 (LCMT1) and pectin methylesterase 1 (PME1). Carboxyl methylation influences the affinity of the catalytic subunit for the different regulatory subunits, thereby modulating the PP2A holoenzyme's substrate specificity, enzyme activity and cellular localization. Phosphorylation of either threonine (by autophosphorylation-activated protein kinase) or tyrosine results in inactivation of the phosphatase. Auto-dephosphorylation has been suggested as a mechanism for reactivation. Post-translationally, ubiquitinated. CHIP-mediated ubiquitination enhances phosphatase activity after an abiotic stress such as low temperature or darkness.

It localises to the cytoplasm. The protein localises to the cytosol. It is found in the peroxisome. The enzyme catalyses O-phospho-L-seryl-[protein] + H2O = L-seryl-[protein] + phosphate. The catalysed reaction is O-phospho-L-threonyl-[protein] + H2O = L-threonyl-[protein] + phosphate. Functionally, associates with the serine/threonine-protein phosphatase PP2A regulatory subunits A and B' to positively regulates beta-oxidation of fatty acids and protoauxins in peroxisomes by dephosphorylating peroxisomal beta-oxidation-related proteins. Involved in the positive regulation of salt stress responses. May function by increasing chloride channel activities on vacuolar membranes. This is Serine/threonine-protein phosphatase PP2A-5 catalytic subunit from Arabidopsis thaliana (Mouse-ear cress).